Here is a 195-residue protein sequence, read N- to C-terminus: Thymidine kinase (195 aa).

Residues 15–22 and 88–91 each bind ATP; these read GSMFSGKS and DEVQ. The Proton acceptor role is filled by E89. Residues C145, C148, C183, and C186 each coordinate Zn(2+).

Belongs to the thymidine kinase family. Homotetramer.

The protein localises to the cytoplasm. It catalyses the reaction thymidine + ATP = dTMP + ADP + H(+). This Bacillus cereus (strain ZK / E33L) protein is Thymidine kinase.